The primary structure comprises 152 residues: Large ribosomal subunit protein eL29 (152 aa).

Over residues 1 to 26 the composition is skewed to basic residues; it reads MAKSKNHTTHNQSRKWHRNGIKKPRS. Residues 1 to 32 are disordered; the sequence is MAKSKNHTTHNQSRKWHRNGIKKPRSQRYESL. The residue at position 5 (K5) is an N6-methyllysine. The residue at position 31 (S31) is a Phosphoserine. Residue K33 is modified to N6-acetyllysine. The disordered stretch occupies residues 119-152; it reads CRPKSQAKASTKAKPPAAAAPAAKGAQAPTKAPE. The span at 121-152 shows a compositional bias: low complexity; the sequence is PKSQAKASTKAKPPAAAAPAAKGAQAPTKAPE.

This sequence belongs to the eukaryotic ribosomal protein eL29 family. In terms of assembly, component of the large ribosomal subunit.

Its subcellular location is the cytoplasm. Functionally, component of the large ribosomal subunit. The ribosome is a large ribonucleoprotein complex responsible for the synthesis of proteins in the cell. This Bos taurus (Bovine) protein is Large ribosomal subunit protein eL29 (RPL29).